The chain runs to 301 residues: Phosphatidylglycerol--prolipoprotein diacylglyceryl transferase (301 aa).

The next 4 helical transmembrane spans lie at 10 to 30 (IAFS…LAGF), 57 to 77 (LLFY…MLFY), 92 to 112 (VWEG…AVAW), and 119 to 139 (MHMF…LGFG). Arg140 provides a ligand contact to a 1,2-diacyl-sn-glycero-3-phospho-(1'-sn-glycerol). The next 3 helical transmembrane spans lie at 202-222 (PSQL…LWLF), 230-250 (YAVS…VEFV), and 264-284 (LTRG…LFWL).

Belongs to the Lgt family.

It is found in the cell inner membrane. It carries out the reaction L-cysteinyl-[prolipoprotein] + a 1,2-diacyl-sn-glycero-3-phospho-(1'-sn-glycerol) = an S-1,2-diacyl-sn-glyceryl-L-cysteinyl-[prolipoprotein] + sn-glycerol 1-phosphate + H(+). Its pathway is protein modification; lipoprotein biosynthesis (diacylglyceryl transfer). In terms of biological role, catalyzes the transfer of the diacylglyceryl group from phosphatidylglycerol to the sulfhydryl group of the N-terminal cysteine of a prolipoprotein, the first step in the formation of mature lipoproteins. This chain is Phosphatidylglycerol--prolipoprotein diacylglyceryl transferase, found in Xylella fastidiosa (strain M23).